The primary structure comprises 64 residues: Prokaryotic ubiquitin-like protein Pup (64 aa).

Positions 1–35 are disordered; sequence MAQGGQVSAGGGRRDDDEPIEQTSGAGTQQVNVTG. Residues 21-33 show a composition bias toward polar residues; that stretch reads EQTSGAGTQQVNV. An ARC ATPase binding region spans residues 21–58; it reads EQTSGAGTQQVNVTGTDDLLDEIDGLLENNAEEFVRSY. Q64 carries the deamidated glutamine modification. Q64 is covalently cross-linked (Isoglutamyl lysine isopeptide (Gln-Lys) (interchain with K-? in acceptor proteins)).

This sequence belongs to the prokaryotic ubiquitin-like protein family. Strongly interacts with the proteasome-associated ATPase ARC through a hydrophobic interface; the interacting region of Pup lies in its C-terminal half. There is one Pup binding site per ARC hexamer ring. Post-translationally, is modified by deamidation of its C-terminal glutamine to glutamate by the deamidase Dop, a prerequisite to the subsequent pupylation process.

It participates in protein degradation; proteasomal Pup-dependent pathway. Protein modifier that is covalently attached to lysine residues of substrate proteins, thereby targeting them for proteasomal degradation. The tagging system is termed pupylation. This chain is Prokaryotic ubiquitin-like protein Pup, found in Corynebacterium jeikeium (strain K411).